A 154-amino-acid chain; its full sequence is Troponin C, isoallergen Bla g 6.0301 (154 aa).

4 EF-hand domains span residues 11–46, 47–82, 87–122, and 123–154; these read EQIS…MGQP, FNRR…FIIE, AMEK…LDEQ, and LTSD…MMTG. Ca(2+)-binding residues include aspartate 60, aspartate 62, serine 64, arginine 66, and glutamate 71. Ca(2+) contacts are provided by aspartate 136, aspartate 138, serine 140, threonine 142, and glutamate 147.

Belongs to the troponin C family.

In terms of biological role, troponin is the central regulatory protein of striated muscle contraction. It consists of three components: Troponin-I (Tn-I) which is the inhibitor of actomyosin ATPase, Troponin-T (Tn-T) which contains the binding site for tropomyosin and Troponin-C (Tn-C). The binding of calcium to Tn-C abolishes the inhibitory action of Tn on actin filaments. This is Troponin C, isoallergen Bla g 6.0301 from Blattella germanica (German cockroach).